Here is a 411-residue protein sequence, read N- to C-terminus: LL-diaminopimelate aminotransferase (411 aa).

Substrate contacts are provided by tyrosine 15 and glycine 42. Residues tyrosine 72, 108 to 109 (SK), tyrosine 132, asparagine 187, tyrosine 218, and 246 to 248 (SFS) contribute to the pyridoxal 5'-phosphate site. Residues lysine 109, tyrosine 132, and asparagine 187 each coordinate substrate. Lysine 249 is modified (N6-(pyridoxal phosphate)lysine). Residues arginine 257 and asparagine 292 each contribute to the pyridoxal 5'-phosphate site. Residues asparagine 292 and arginine 388 each coordinate substrate.

It belongs to the class-I pyridoxal-phosphate-dependent aminotransferase family. LL-diaminopimelate aminotransferase subfamily. Homodimer. Pyridoxal 5'-phosphate serves as cofactor.

The enzyme catalyses (2S,6S)-2,6-diaminopimelate + 2-oxoglutarate = (S)-2,3,4,5-tetrahydrodipicolinate + L-glutamate + H2O + H(+). The protein operates within amino-acid biosynthesis; L-lysine biosynthesis via DAP pathway; LL-2,6-diaminopimelate from (S)-tetrahydrodipicolinate (aminotransferase route): step 1/1. In terms of biological role, involved in the synthesis of meso-diaminopimelate (m-DAP or DL-DAP), required for both lysine and peptidoglycan biosynthesis. Catalyzes the direct conversion of tetrahydrodipicolinate to LL-diaminopimelate. The sequence is that of LL-diaminopimelate aminotransferase from Citrifermentans bemidjiense (strain ATCC BAA-1014 / DSM 16622 / JCM 12645 / Bem) (Geobacter bemidjiensis).